We begin with the raw amino-acid sequence, 146 residues long: Putative calcium-binding protein CML19 (146 aa).

EF-hand domains follow at residues 3–38 (AATA…ALGE), 40–75 (MSAE…LEMG), 79–114 (ERCR…LGSH), and 115–146 (QGIE…MMDA). 9 residues coordinate Ca(2+): D16, D18, D20, K22, E27, D53, D55, D57, and E64. D128, D130, D132, and E139 together coordinate Ca(2+).

Functionally, potential calcium sensor. This chain is Putative calcium-binding protein CML19 (CML19), found in Oryza sativa subsp. japonica (Rice).